Here is a 319-residue protein sequence, read N- to C-terminus: Quinolinate synthase (319 aa).

Residues H34 and S51 each coordinate iminosuccinate. C96 provides a ligand contact to [4Fe-4S] cluster. Iminosuccinate is bound by residues 122–124 (YIN) and S139. A [4Fe-4S] cluster-binding site is contributed by C182. Residues 208-210 (HPE) and T225 contribute to the iminosuccinate site. C276 is a [4Fe-4S] cluster binding site.

This sequence belongs to the quinolinate synthase family. Type 2 subfamily. [4Fe-4S] cluster is required as a cofactor.

It is found in the cytoplasm. It carries out the reaction iminosuccinate + dihydroxyacetone phosphate = quinolinate + phosphate + 2 H2O + H(+). It participates in cofactor biosynthesis; NAD(+) biosynthesis; quinolinate from iminoaspartate: step 1/1. Catalyzes the condensation of iminoaspartate with dihydroxyacetone phosphate to form quinolinate. The sequence is that of Quinolinate synthase from Thermosynechococcus vestitus (strain NIES-2133 / IAM M-273 / BP-1).